A 668-amino-acid polypeptide reads, in one-letter code: GTP-binding protein 1 (668 aa).

The segment at M1–A32 is disordered. S6, S8, S12, S24, S25, S44, S47, and S69 each carry phosphoserine. A tr-type G domain is found at F158–Y389. A G1 region spans residues G167–S174. G167–S174 is a binding site for GTP. A G2 region spans residues G206–S210. The tract at residues D252–G255 is G3. Residues D252–H256 and T308–D311 contribute to the GTP site. Residues T308–D311 are G4. The segment at S366–V368 is G5. A compositionally biased stretch (polar residues) spans L573–K595. The tract at residues L573–C668 is disordered. A Phosphoserine modification is found at S580. Residues G609–G619 show a composition bias toward low complexity. The span at S624–Q637 shows a compositional bias: polar residues. Residues G646–K657 show a composition bias toward basic residues.

Belongs to the TRAFAC class translation factor GTPase superfamily. Classic translation factor GTPase family. GTPBP1 subfamily. Interacts with EXOSC2/RRP4, EXOSC3/RRP40, EXOSC5/RRP46, HNRNPD, HNRNPR and SYNCRIP. Identified in a complex with AANAT mRNA, but does not bind mRNA by itself. Detected in some neurons in the brain cortex. Detected in small arteries, dendritic cells and macrophages in the thymus. Detected in lung bronchi, in bronchial epithelial cells and in bronchial smooth muscle cells. Detected in smooth muscle cells in a broad range of organs (at protein level). Expressed in brain, thymus, lung, and kidney.

It is found in the cytoplasm. Promotes degradation of target mRNA species. Plays a role in the regulation of circadian mRNA stability. Binds GTP and has GTPase activity. This Mus musculus (Mouse) protein is GTP-binding protein 1 (Gtpbp1).